The following is a 209-amino-acid chain: 60S ribosomal subunit assembly/export protein loc-1 (209 aa).

2 disordered regions span residues 1-53 and 135-209; these read MAPT…SKGR and REAR…AAPE. 2 stretches are compositionally biased toward basic and acidic residues: residues 20 to 33 and 135 to 159; these read GSKD…DGVL and REAR…TKDS. Residues 126–170 are a coiled coil; that stretch reads IKARQMEEIREARRAEAEKKEAERKARLEETKDSLRKKRKRSKQS.

The protein belongs to the LOC1 family. In terms of assembly, component of the 66S pre-ribosomal particle.

The protein resides in the nucleus. Its subcellular location is the nucleolus. In terms of biological role, required for efficient assembly and nuclear export of the 60S ribosomal subunit. The protein is 60S ribosomal subunit assembly/export protein loc-1 (loc-1) of Neurospora crassa (strain ATCC 24698 / 74-OR23-1A / CBS 708.71 / DSM 1257 / FGSC 987).